The sequence spans 414 residues: Isocitrate dehydrogenase [NADP] cytoplasmic (414 aa).

The residue at position 2 (S2) is an N-acetylserine. Y42 is subject to Phosphotyrosine. 75-77 (TIT) lines the NADP(+) pocket. T77 serves as a coordination point for substrate. K81 bears the N6-acetyllysine mark. Residue R82 coordinates NADP(+). Substrate is bound by residues 94–100 (SPNGTIR) and R109. An N6-succinyllysine modification is found at K126. Substrate is bound by residues R132 and K212. N6-acetyllysine occurs at positions 224, 233, and 243. Residue D252 participates in Mn(2+) binding. K260 serves as a coordination point for NADP(+). The Mn(2+) site is built by D275 and D279. Position 310-315 (310-315 (GTVTRH)) interacts with NADP(+). An N6-acetyllysine modification is found at K321. N328 contacts NADP(+). S389 carries the phosphoserine modification. Residue K400 is modified to N6-succinyllysine.

Belongs to the isocitrate and isopropylmalate dehydrogenases family. As to quaternary structure, homodimer. Requires Mg(2+) as cofactor. Mn(2+) serves as cofactor. Post-translationally, acetylation at Lys-374 dramatically reduces catalytic activity.

It localises to the cytoplasm. The protein localises to the cytosol. The enzyme catalyses D-threo-isocitrate + NADP(+) = 2-oxoglutarate + CO2 + NADPH. Catalyzes the NADP(+)-dependent oxidative decarboxylation of isocitrate (D-threo-isocitrate) to 2-ketoglutarate (2-oxoglutarate), which is required by other enzymes such as the phytanoyl-CoA dioxygenase. Plays a critical role in the generation of NADPH, an important cofactor in many biosynthesis pathways. May act as a corneal epithelial crystallin and may be involved in maintaining corneal epithelial transparency. This Pongo abelii (Sumatran orangutan) protein is Isocitrate dehydrogenase [NADP] cytoplasmic (IDH1).